A 343-amino-acid chain; its full sequence is N-acetyl-gamma-glutamyl-phosphate reductase (343 aa).

The active site involves Cys146.

It belongs to the NAGSA dehydrogenase family. Type 1 subfamily.

It is found in the cytoplasm. It carries out the reaction N-acetyl-L-glutamate 5-semialdehyde + phosphate + NADP(+) = N-acetyl-L-glutamyl 5-phosphate + NADPH + H(+). It functions in the pathway amino-acid biosynthesis; L-arginine biosynthesis; N(2)-acetyl-L-ornithine from L-glutamate: step 3/4. Catalyzes the NADPH-dependent reduction of N-acetyl-5-glutamyl phosphate to yield N-acetyl-L-glutamate 5-semialdehyde. This is N-acetyl-gamma-glutamyl-phosphate reductase from Pseudarthrobacter chlorophenolicus (strain ATCC 700700 / DSM 12829 / CIP 107037 / JCM 12360 / KCTC 9906 / NCIMB 13794 / A6) (Arthrobacter chlorophenolicus).